Here is a 578-residue protein sequence, read N- to C-terminus: Laccase-10 (578 aa).

A signal peptide spans methionine 1–alanine 29. Plastocyanin-like domains lie at asparagine 37–glycine 153 and lysine 163–proline 319. Asparagine 42 and asparagine 83 each carry an N-linked (GlcNAc...) asparagine glycan. The Cu cation site is built by histidine 87 and histidine 89. Asparagine 119 carries an N-linked (GlcNAc...) asparagine glycan. Histidine 132 and histidine 134 together coordinate Cu cation. Residues asparagine 192, asparagine 208, asparagine 244, asparagine 307, asparagine 336, asparagine 384, asparagine 392, asparagine 402, asparagine 438, asparagine 445, asparagine 448, asparagine 451, and asparagine 461 are each glycosylated (N-linked (GlcNAc...) asparagine). The region spanning aspartate 428–proline 562 is the Plastocyanin-like 3 domain. The Cu cation site is built by histidine 479, histidine 482, histidine 484, histidine 541, cysteine 542, histidine 543, and histidine 547.

It belongs to the multicopper oxidase family. Cu cation is required as a cofactor.

It localises to the secreted. The protein resides in the extracellular space. Its subcellular location is the apoplast. The enzyme catalyses 4 hydroquinone + O2 = 4 benzosemiquinone + 2 H2O. Its function is as follows. Lignin degradation and detoxification of lignin-derived products. The protein is Laccase-10 (LAC10) of Oryza sativa subsp. japonica (Rice).